The chain runs to 1229 residues: ABC transporter B family member 3 (1229 aa).

Residues 22 to 42 (VLLMIVGSIGAIGNGVGFPLM) traverse the membrane as a helical segment. An ABC transmembrane type-1 1 domain is found at 25-313 (MIVGSIGAIG…TTPCLTAFAA (289 aa)). Asn56 carries N-linked (GlcNAc...) asparagine glycosylation. 5 consecutive transmembrane segments (helical) span residues 73–93 (FVYL…CWMI), 149–169 (FIQL…KGWL), 172–192 (LVML…PIIV), 252–272 (GLGL…AIWF), and 281–301 (GYTG…SMSL). An ABC transporter 1 domain is found at 348 to 584 (IELRDVCFSY…HEGAYAQLIR (237 aa)). Position 383–390 (383–390 (GESGSGKS)) interacts with ATP. N-linked (GlcNAc...) asparagine glycosylation is present at Asn450. A compositionally biased stretch (basic and acidic residues) spans 594–606 (RLESSNELRDRSI). A disordered region spans residues 594–614 (RLESSNELRDRSINRGSSRNI). Asn645 carries N-linked (GlcNAc...) asparagine glycosylation. A run of 2 helical transmembrane segments spans residues 661 to 681 (ILIL…IFGI) and 706 to 726 (MIFV…TYLF). Positions 662 to 949 (LILGTLLGAV…ASSFAPDSSK (288 aa)) constitute an ABC transmembrane type-1 2 domain. A glycan (N-linked (GlcNAc...) asparagine) is linked at Asn758. Transmembrane regions (helical) follow at residues 797–817 (IIAF…IPLI), 888–908 (GVGF…CFYV), and 923–943 (VFQV…ASSF). In terms of domain architecture, ABC transporter 2 spans 984–1222 (IELCHISFTY…EGGVYASLVQ (239 aa)). 1019-1026 (GESGSGKS) contributes to the ATP binding site. N-linked (GlcNAc...) asparagine glycans are attached at residues Asn1073 and Asn1173.

The protein belongs to the ABC transporter superfamily. ABCB family. Multidrug resistance exporter (TC 3.A.1.201) subfamily.

It localises to the membrane. This Arabidopsis thaliana (Mouse-ear cress) protein is ABC transporter B family member 3 (ABCB3).